A 221-amino-acid chain; its full sequence is 2-amino-5-formylamino-6-ribosylaminopyrimidin-4(3H)-one 5'-monophosphate deformylase (221 aa).

Fe cation-binding residues include Glu-29, His-31, Asp-40, and His-108.

The protein belongs to the creatininase superfamily. FAPy deformylase family. In terms of assembly, homodimer. Fe(2+) serves as cofactor. It depends on Zn(2+) as a cofactor.

The catalysed reaction is 2-amino-5-formylamino-6-(5-phospho-D-ribosylamino)pyrimidin-4(3H)-one + H2O = 2,5-diamino-6-(1-D-ribosylamino)pyrimidin-4(3H)-one 5'-phosphate + formate + H(+). Its pathway is cofactor biosynthesis; coenzyme F420 biosynthesis. The protein operates within cofactor biosynthesis; riboflavin biosynthesis. Functionally, catalyzes the hydrolysis of the formamide of 2-amino-5-formylamino-6-ribosylamino-4(3H)-pyrimidinone 5'-monophosphate (FAPy) to form 2,5-diamino-6-ribosylamino-4(3H)-pyrimidinone 5'-phosphate (APy). The protein is 2-amino-5-formylamino-6-ribosylaminopyrimidin-4(3H)-one 5'-monophosphate deformylase of Methanococcus maripaludis (strain DSM 14266 / JCM 13030 / NBRC 101832 / S2 / LL).